The sequence spans 473 residues: Dolichyl-diphosphooligosaccharide--protein glycosyltransferase subunit 1B (473 aa).

The N-terminal stretch at 1–27 is a signal peptide; sequence MAPSLSTAVSSLLLLLLLAAAISVSSS. The Lumenal portion of the chain corresponds to 28–439; it reads PPMPEDSIRV…PFQVYYEFNP (412 aa). N-linked (GlcNAc...) asparagine glycans are attached at residues Asn307 and Asn361. The chain crosses the membrane as a helical span at residues 440-460; sequence IFMLAEPLMLISAVFLFFVAC. The Cytoplasmic portion of the chain corresponds to 461 to 473; that stretch reads IAYLHMDLSIGKS.

This sequence belongs to the OST1 family. Component of the oligosaccharyltransferase (OST) complex.

The protein localises to the endoplasmic reticulum membrane. It functions in the pathway protein modification; protein glycosylation. Functionally, subunit of the oligosaccharyl transferase (OST) complex that catalyzes the initial transfer of a defined glycan (Glc(3)Man(9)GlcNAc(2) in eukaryotes) from the lipid carrier dolichol-pyrophosphate to an asparagine residue within an Asn-X-Ser/Thr consensus motif in nascent polypeptide chains, the first step in protein N-glycosylation. N-glycosylation occurs cotranslationally and the complex associates with the Sec61 complex at the channel-forming translocon complex that mediates protein translocation across the endoplasmic reticulum (ER). All subunits are required for a maximal enzyme activity. The chain is Dolichyl-diphosphooligosaccharide--protein glycosyltransferase subunit 1B (OST1B) from Oryza sativa subsp. japonica (Rice).